Reading from the N-terminus, the 837-residue chain is Ribosome-releasing factor 2, mitochondrial (837 aa).

Residues 1 to 29 (MFSINARTKVPIWVPFIARKGFSMSTRQL) constitute a mitochondrion transit peptide. A tr-type G domain is found at 40–331 (LNTRNIGIIA…GVVDYLPSPL (292 aa)). Residues 49–56 (AHIDAGKT), 113–117 (DTPGH), and 167–170 (NKMD) each bind GTP. The tract at residues 338-359 (ITASTSKVSKKQKQKKNSKVSS) is disordered. Residues 345-355 (VSKKQKQKKNS) are compositionally biased toward basic residues.

This sequence belongs to the TRAFAC class translation factor GTPase superfamily. Classic translation factor GTPase family. EF-G/EF-2 subfamily.

The protein resides in the mitochondrion. Its function is as follows. Mitochondrial GTPase that mediates the disassembly of ribosomes from messenger RNA at the termination of mitochondrial protein biosynthesis. Not involved in the GTP-dependent ribosomal translocation step during translation elongation. This chain is Ribosome-releasing factor 2, mitochondrial, found in Meyerozyma guilliermondii (strain ATCC 6260 / CBS 566 / DSM 6381 / JCM 1539 / NBRC 10279 / NRRL Y-324) (Yeast).